Consider the following 619-residue polypeptide: Replication restart protein PriA (619 aa).

The 167-residue stretch at Leu119–Gly285 folds into the Helicase ATP-binding domain. Gly132 to Thr139 is a binding site for ATP. A DEAH box motif is present at residues Asp228–His231. Residues Cys336, Cys339, Cys345, Cys348, Cys363, Cys366, Cys376, and Cys379 each contribute to the Zn(2+) site. The Helicase C-terminal domain maps to Pro371–Cys532.

This sequence belongs to the helicase family. PriA subfamily. Component of the replication restart primosome. The cofactor is Zn(2+).

It carries out the reaction Couples ATP hydrolysis with the unwinding of duplex DNA by translocating in the 3'-5' direction.. It catalyses the reaction ATP + H2O = ADP + phosphate + H(+). In terms of biological role, initiates the restart of stalled replication forks, which reloads the replicative helicase on sites other than the origin of replication. Recognizes and binds to abandoned replication forks and remodels them to uncover a helicase loading site. Promotes assembly of the primosome at these replication forks. Functionally, important for survival of the bacteria in host cells. This chain is Replication restart protein PriA, found in Helicobacter pylori (strain ATCC 700392 / 26695) (Campylobacter pylori).